Reading from the N-terminus, the 137-residue chain is Ribosome-binding factor A (137 aa).

A disordered region spans residues 114–137 (QLIDEARAEDRELRPEDDETGNNE). Positions 117-127 (DEARAEDRELR) are enriched in basic and acidic residues. The segment covering 128-137 (PEDDETGNNE) has biased composition (acidic residues).

Belongs to the RbfA family. As to quaternary structure, monomer. Binds 30S ribosomal subunits, but not 50S ribosomal subunits or 70S ribosomes.

It is found in the cytoplasm. Its function is as follows. One of several proteins that assist in the late maturation steps of the functional core of the 30S ribosomal subunit. Associates with free 30S ribosomal subunits (but not with 30S subunits that are part of 70S ribosomes or polysomes). Required for efficient processing of 16S rRNA. May interact with the 5'-terminal helix region of 16S rRNA. This chain is Ribosome-binding factor A, found in Alcanivorax borkumensis (strain ATCC 700651 / DSM 11573 / NCIMB 13689 / SK2).